The chain runs to 402 residues: Iripin-8 (402 aa).

A signal peptide spans 1-16 (MTRLLWLFAAITASLA). N-linked (GlcNAc...) asparagine glycans are attached at residues N164 and N230.

It belongs to the serpin family. In terms of assembly, interacts with host thrombin/F2. Interacts with host coagulation factor VII/F7 (activated). Interacts with host coagulation factor X/F10 (activated). Interacts with host coagulation factor XII/F12 (activated). Interacts with host coagulation factor IX/F9 (activated). Interacts with host plasmin/PLG. Interacts with host protein C/PROC (activated). In terms of tissue distribution, saliva (at protein level). Salivary gland. Midgut. Low-level expression in ovary.

It is found in the secreted. Its function is as follows. Serine protease inhibitor that modulates blood feeding of ticks on vertebrate species. Inhibits the intrinsic and common pathways of blood coagulation in the host. Inhibits host thrombin, factor VIIa, factor Xa, factor XIa, factor XIIa, plasmin and activated protein C. Inhibits host trypsin and kallikrein. Reduces host complement activity. Does not affect proliferation of CD4+ T-cells and neutrophil migration. The sequence is that of Iripin-8 from Ixodes ricinus (Common tick).